The sequence spans 329 residues: MQNLKQITEQARAALDELHDKGIEALENFRVEYFGKKGHFTQLMQGLRDVLPEERPAMGAKINEAKQTVLEILNAKKEQIEQAALNVKLEQERIDVSLPGRKVEAGGLHPVSITIGRVTKFFSELGFSVESGPEIESDYYNFDALNIPKHHPARADHDTFWFNPELLLRTQTSGVQIRTMEKKQPPIRIMAPGRVYRNDYDQTHTPMFHQIELLYVDKNANFTELKGLLHDFLRAFFEEDLQVRFRPSYFPFTEPSAEVDVMGKNGKWLEVLGCGMVHPNVLRNVGIDPNEYSGFAVGMGVERLTMLRYNVTDLRSFFENDLRFLKQFK.

Glutamate 254 contacts Mg(2+).

The protein belongs to the class-II aminoacyl-tRNA synthetase family. Phe-tRNA synthetase alpha subunit type 1 subfamily. Tetramer of two alpha and two beta subunits. Mg(2+) is required as a cofactor.

The protein resides in the cytoplasm. The enzyme catalyses tRNA(Phe) + L-phenylalanine + ATP = L-phenylalanyl-tRNA(Phe) + AMP + diphosphate + H(+). The protein is Phenylalanine--tRNA ligase alpha subunit of Actinobacillus succinogenes (strain ATCC 55618 / DSM 22257 / CCUG 43843 / 130Z).